Consider the following 27-residue polypeptide: Cupiennin-3a (27 aa).

Glu-27 carries the post-translational modification Glutamic acid 1-amide.

In terms of tissue distribution, expressed by the venom gland.

It localises to the secreted. In Cupiennius salei (American wandering spider), this protein is Cupiennin-3a.